Reading from the N-terminus, the 372-residue chain is Protein L-Myc-1a (372 aa).

Disordered regions lie at residues 172–226 (KVAA…ADPF) and 243–306 (NYAA…DDLR). Over residues 187-197 (SDDDEDDDEID) the composition is skewed to acidic residues. Over residues 269 to 284 (ESSSAPSSPLSSPATS) the composition is skewed to low complexity. Residues 289–341 (STEQRRNFLERKRRDDLRSRFQALREEIPGLSGSSKTSKVAILTQATDYLLQL) form the bHLH domain. Basic and acidic residues predominate over residues 290 to 306 (TEQRRNFLERKRRDDLR). The segment at 341–369 (LHSSQRRQAQEKRKLKAKQQQLLRRISAL) is leucine-zipper.

As to quaternary structure, efficient DNA binding requires dimerization with another bHLH protein. Binds DNA as a heterodimer with max. Uterus.

It is found in the nucleus. This is Protein L-Myc-1a from Danio rerio (Zebrafish).